Consider the following 159-residue polypeptide: Ribosomal RNA large subunit methyltransferase H (159 aa).

S-adenosyl-L-methionine contacts are provided by residues L76, G108, and 127–132 (FSKMTF).

The protein belongs to the RNA methyltransferase RlmH family. As to quaternary structure, homodimer.

It is found in the cytoplasm. It carries out the reaction pseudouridine(1915) in 23S rRNA + S-adenosyl-L-methionine = N(3)-methylpseudouridine(1915) in 23S rRNA + S-adenosyl-L-homocysteine + H(+). Specifically methylates the pseudouridine at position 1915 (m3Psi1915) in 23S rRNA. This chain is Ribosomal RNA large subunit methyltransferase H, found in Bifidobacterium longum subsp. infantis (strain ATCC 15697 / DSM 20088 / JCM 1222 / NCTC 11817 / S12).